The following is a 190-amino-acid chain: Threonylcarbamoyl-AMP synthase (190 aa).

The region spanning 7-190 is the YrdC-like domain; that stretch reads TGSIAAAVDL…ALTGELFRQG (184 aa).

This sequence belongs to the SUA5 family. TsaC subfamily.

It localises to the cytoplasm. It catalyses the reaction L-threonine + hydrogencarbonate + ATP = L-threonylcarbamoyladenylate + diphosphate + H2O. Functionally, required for the formation of a threonylcarbamoyl group on adenosine at position 37 (t(6)A37) in tRNAs that read codons beginning with adenine. Catalyzes the conversion of L-threonine, HCO(3)(-)/CO(2) and ATP to give threonylcarbamoyl-AMP (TC-AMP) as the acyladenylate intermediate, with the release of diphosphate. The chain is Threonylcarbamoyl-AMP synthase from Salmonella arizonae (strain ATCC BAA-731 / CDC346-86 / RSK2980).